The following is a 469-amino-acid chain: MAVPISTVAETKELRGLNLIAAHSHIRGLGVDADSLQPRTSSQGLVGQEKARKAAAVILQMVKEGKIAGRAVLIAGPPSTGKTAIAMGMAQSLGSDVPFTMLAASEIFSMEMSKTEALTQAFRKSIGVRIKEESEIIEGEVVEIQVDRSVTGGNKQGKLTIKTTDMETIYDMGTKMIDSMTKERVMAGDVISIDKSSGKITKLGRSYARSRDYDAMGADTKFVQCPEGELQVRKEIVHTVSLHEIDVINSRTQGFLALFSGDTGEIRSEVRDQINTKVAEWKEEGKAEIIPGVLFIDEVHMLDIECFSYINRALEAELAPIVIMASNRGQARIRGTTYTSPHGLPLDFLDRVVIVSTQPYSGDEIRQILAIRAQEEEIDLSPDALALLTKIGQESNLRYASNIITTSHLLSQKRKAKEVSIDDVQRSYRLFYDPARSVKFVNAYEQRFIGDQGAVNFSAPANGDAMEIS.

Position 76–83 (76–83) interacts with ATP; that stretch reads GPPSTGKT.

The protein belongs to the RuvB family. As to quaternary structure, may form heterododecamers with RVB1. Component of the SWR1 chromatin remodeling complex, the INO80 chromatin remodeling complex, and of the R2TP complex.

Its subcellular location is the nucleus. It carries out the reaction ATP + H2O = ADP + phosphate + H(+). DNA helicase which participates in several chromatin remodeling complexes, including the SWR1 and the INO80 complexes. The SWR1 complex mediates the ATP-dependent exchange of histone H2A for the H2A variant HZT1 leading to transcriptional regulation of selected genes by chromatin remodeling. The INO80 complex remodels chromatin by shifting nucleosomes and is involved in DNA repair. Also involved in pre-rRNA processing. The chain is RuvB-like helicase 2 (rvb2) from Aspergillus fumigatus (strain ATCC MYA-4609 / CBS 101355 / FGSC A1100 / Af293) (Neosartorya fumigata).